A 527-amino-acid chain; its full sequence is ATP-dependent RNA helicase DBP3 (527 aa).

A compositionally biased stretch (basic residues) spans 1-11 (MSKDHKDKKRK). Positions 1–89 (MSKDHKDKKR…TGYSQSPALT (89 aa)) are disordered. A compositionally biased stretch (basic and acidic residues) spans 12-24 (HSDEATEEVEKKT). The segment covering 25 to 44 (KVSKKEKKDKKEKKEKKDKK) has biased composition (basic residues). Basic and acidic residues predominate over residues 45–71 (EKKDKSEKKDKSEKKEKKEKKESEDVP). Residues 72–89 (TKSSAVVSTGYSQSPALT) are compositionally biased toward polar residues. The Q motif motif lies at 119 to 145 (LGFDQIDLDSRIASVISKFPTPTPIQA). The 172-residue stretch at 148-319 (WPYLLSGKDV…STFMNSPVKV (172 aa)) folds into the Helicase ATP-binding domain. Residue 161-168 (AETGSGKT) participates in ATP binding. The short motif at 266–269 (DEAD) is the DEAD box element. Residues 348-497 (KLLSLLRKYQ…PVPDELLKFG (150 aa)) form the Helicase C-terminal domain.

Belongs to the DEAD box helicase family. DDX5/DBP2 subfamily.

The protein resides in the nucleus. It is found in the nucleolus. The enzyme catalyses ATP + H2O = ADP + phosphate + H(+). Its function is as follows. ATP-dependent RNA helicase required for 60S ribosomal subunit synthesis. Involved in efficient pre-rRNA processing, predominantly at site A3, which is necessary for the normal formation of 25S and 5.8S rRNAs. This Debaryomyces hansenii (strain ATCC 36239 / CBS 767 / BCRC 21394 / JCM 1990 / NBRC 0083 / IGC 2968) (Yeast) protein is ATP-dependent RNA helicase DBP3 (DBP3).